The chain runs to 144 residues: NADH dehydrogenase [ubiquinone] 1 alpha subcomplex subunit 13 (144 aa).

Residue Ala2 is modified to N-acetylalanine. Residues 30–51 (LSGYSMFAVGIGALIFGYWRMM) form a helical membrane-spanning segment.

This sequence belongs to the complex I NDUFA13 subunit family. Complex I is composed of 45 different subunits. Interacts with CARD15, but not with CARD4. Interacts with STAT3, but not with STAT1, STAT2 and STAT5A. Interacts with OLFM4.

Its subcellular location is the mitochondrion inner membrane. It is found in the nucleus. Its function is as follows. Accessory subunit of the mitochondrial membrane respiratory chain NADH dehydrogenase (Complex I), that is believed not to be involved in catalysis. Complex I functions in the transfer of electrons from NADH to the respiratory chain. The immediate electron acceptor for the enzyme is believed to be ubiquinone. Involved in the interferon/all-trans-retinoic acid (IFN/RA) induced cell death. This apoptotic activity is inhibited by interaction with viral IRF1. Prevents the transactivation of STAT3 target genes. May play a role in CARD15-mediated innate mucosal responses and serve to regulate intestinal epithelial cell responses to microbes. This Mus musculus (Mouse) protein is NADH dehydrogenase [ubiquinone] 1 alpha subcomplex subunit 13 (Ndufa13).